The primary structure comprises 165 residues: Calcium-binding protein H (165 aa).

4 consecutive EF-hand domains span residues 7 to 42, 43 to 78, 88 to 123, and 124 to 159; these read QIEKDVEKIIGQYDGDKNGEVTINEAIEFFKRMGSK, YPEKCAIVLFKMYDLDNEGKISYDEIQEEIFKRYQD, YFQDDIEAFLLRYDKNRDNRIDFKELEQCFESIGSD, and HPKENANHIFTEIDKNRDGYLTIAEIKNYCRNTIRS. Ca(2+) is bound by residues Asp-20, Asp-22, Asn-24, Glu-26, Glu-31, Asp-56, Asp-58, Glu-60, Lys-62, Glu-67, Asp-101, Asn-103, Asp-105, Arg-107, Glu-112, Asp-137, Asn-139, Asp-141, Tyr-143, and Glu-148.

This chain is Calcium-binding protein H (cbpH), found in Dictyostelium discoideum (Social amoeba).